Here is a 438-residue protein sequence, read N- to C-terminus: Glutamate-1-semialdehyde 2,1-aminomutase (438 aa).

Lysine 278 carries the N6-(pyridoxal phosphate)lysine modification.

It belongs to the class-III pyridoxal-phosphate-dependent aminotransferase family. HemL subfamily. Homodimer. Pyridoxal 5'-phosphate serves as cofactor.

The protein resides in the cytoplasm. It catalyses the reaction (S)-4-amino-5-oxopentanoate = 5-aminolevulinate. It functions in the pathway porphyrin-containing compound metabolism; protoporphyrin-IX biosynthesis; 5-aminolevulinate from L-glutamyl-tRNA(Glu): step 2/2. This Delftia acidovorans (strain DSM 14801 / SPH-1) protein is Glutamate-1-semialdehyde 2,1-aminomutase.